Here is a 748-residue protein sequence, read N- to C-terminus: SNF-related serine/threonine-protein kinase (748 aa).

A Protein kinase domain is found at 16–269 (YDLDKTLGRG…LEEIESHPWL (254 aa)). ATP contacts are provided by residues 22–30 (LGRGHFAVV) and lysine 45. Residue aspartate 139 is the Proton acceptor of the active site. Residue serine 162 is modified to Phosphoserine. Threonine 173 bears the Phosphothreonine; by LKB1 mark. Residues 291 to 334 (SEEEHNSIIQRMVLGDIADRDAIVEALETNRYNHITATYFLLAE) enclose the UBA domain. A phosphoserine mark is found at serine 362, serine 390, serine 482, serine 495, and serine 518. Residues 383–415 (SHATVPQSPARAGDNVLNGHRSKGLCDPAKKDE) form a disordered region. Acidic residues predominate over residues 491–503 (EEGESDDEFDMDE). Residues 491–640 (EEGESDDEFD…SPSPASASAA (150 aa)) form a disordered region. The segment covering 522–532 (VHKRYHRRKSQ) has biased composition (basic residues). The span at 533–542 (GRGSSCSSSE) shows a compositional bias: low complexity. Arginine 534 bears the Omega-N-methylarginine mark. The span at 549–558 (ESRRRLDKDS) shows a compositional bias: basic and acidic residues. Composition is skewed to gly residues over residues 575-592 (GSEGDGGGQSKPSSGGGV) and 600-614 (QGTGGGSQGGSGGTP). The residue at position 606 (serine 606) is a Phosphoserine. Positions 629–640 (SSSPSPASASAA) are enriched in low complexity.

It belongs to the protein kinase superfamily. CAMK Ser/Thr protein kinase family. It depends on Mg(2+) as a cofactor. Post-translationally, autophosphorylated. Phosphorylation on Thr-173 by STK11/LKB1 in complex with STE20-related adapter-alpha (STRADA) pseudo kinase and CAB39. Ubiquitously expressed in all tissues examined.

The protein resides in the nucleus. It catalyses the reaction L-seryl-[protein] + ATP = O-phospho-L-seryl-[protein] + ADP + H(+). The enzyme catalyses L-threonyl-[protein] + ATP = O-phospho-L-threonyl-[protein] + ADP + H(+). Activated by phosphorylation on Thr-173. In terms of biological role, may play a role in hematopoietic cell proliferation or differentiation. Potential mediator of neuronal apoptosis. The chain is SNF-related serine/threonine-protein kinase from Mus musculus (Mouse).